Reading from the N-terminus, the 337-residue chain is Lipoate-protein ligase A (337 aa).

The 188-residue stretch at 29–216 (DQNQTILFLW…AFFNYYQTTV (188 aa)) folds into the BPL/LPL catalytic domain. Residues arginine 71, 76–79 (GAVF), and lysine 134 contribute to the ATP site. Residue lysine 134 participates in (R)-lipoate binding.

This sequence belongs to the LplA family. As to quaternary structure, monomer.

It is found in the cytoplasm. It carries out the reaction L-lysyl-[lipoyl-carrier protein] + (R)-lipoate + ATP = N(6)-[(R)-lipoyl]-L-lysyl-[lipoyl-carrier protein] + AMP + diphosphate + H(+). Its pathway is protein modification; protein lipoylation via exogenous pathway; protein N(6)-(lipoyl)lysine from lipoate: step 1/2. The protein operates within protein modification; protein lipoylation via exogenous pathway; protein N(6)-(lipoyl)lysine from lipoate: step 2/2. Catalyzes both the ATP-dependent activation of exogenously supplied lipoate to lipoyl-AMP and the transfer of the activated lipoyl onto the lipoyl domains of lipoate-dependent enzymes. The protein is Lipoate-protein ligase A of Blochmanniella floridana.